A 587-amino-acid chain; its full sequence is D-lactate dehydrogenase [cytochrome] 1, mitochondrial (587 aa).

The FAD-binding PCMH-type domain occupies 146–327 (SPEQRPRIIL…TEATVKCHVK (182 aa)).

It belongs to the FAD-binding oxidoreductase/transferase type 4 family. The cofactor is FAD.

It localises to the mitochondrion inner membrane. It carries out the reaction (R)-lactate + 2 Fe(III)-[cytochrome c] = 2 Fe(II)-[cytochrome c] + pyruvate + 2 H(+). Catalyzes the stereospecific oxidation of D-lactate to pyruvate. In Saccharomyces cerevisiae (strain ATCC 204508 / S288c) (Baker's yeast), this protein is D-lactate dehydrogenase [cytochrome] 1, mitochondrial.